Consider the following 398-residue polypeptide: Secreted aspartic protease 2 (398 aa).

Positions 1 to 18 (MFLKNIFIALAIALLVDA) are cleaved as a signal peptide. Residues 19–56 (TPTTTKRSAGFVALDFSVVKTPKAFPVTNGQEGKTSKR) constitute a propeptide, activation peptide. One can recognise a Peptidase A1 domain in the interval 70–384 (YAADITVGSN…DLDDNEISLA (315 aa)). Aspartate 88 is an active-site residue. 88–90 (DTG) is a binding site for pepstatin A. Cysteines 103 and 115 form a disulfide. Pepstatin A is bound at residue 141-142 (GD). Zn(2+)-binding residues include aspartate 247 and aspartate 270. Aspartate 274 is a catalytic residue. 274–278 (DSGTT) contacts pepstatin A. Cysteine 312 and cysteine 350 are disulfide-bonded. Residues asparagine 313 and asparagine 321 are each glycosylated (N-linked (GlcNAc...) asparagine).

Belongs to the peptidase A1 family. Monomer.

It is found in the secreted. The enzyme catalyses Preferential cleavage at the carboxyl of hydrophobic amino acids, but fails to cleave 15-Leu-|-Tyr-16, 16-Tyr-|-Leu-17 and 24-Phe-|-Phe-25 of insulin B chain. Activates trypsinogen, and degrades keratin.. In terms of biological role, secreted aspartic peptidases (SAPs) are a group of ten acidic hydrolases considered as key virulence factors. These enzymes supply the fungus with nutrient amino acids as well as are able to degrade the selected host's proteins involved in the immune defense. Induces host inflammatory cytokine production in a proteolytic activity-independent way. Plays a role in tissue damage during superficial infection. Moreover, acts toward human hemoglobin though limited proteolysis to generate a variety of antimicrobial hemocidins, enabling to compete with the other microorganisms of the same physiological niche using the microbicidal peptides generated from the host protein. Its function is as follows. Plays a key role in defense against host by cleaving histatin-5 (Hst 5), a peptide from human saliva that carries out fungicidal activity. The cleavage rate decreases in an order of SAP2 &gt; SAP9 &gt; SAP3 &gt; SAP7 &gt; SAP4 &gt; SAP1 &gt; SAP8. The first cleavage occurs between residues 'Lys-17' and 'His-18' of Hst 5, giving DSHAKRHHGYKRKFHEK and HHSHRGY peptides. Simultaneously, the DSHAKRHHGYKRK peptide is also formed. Further fragmentation by SAP2 results in FHEK and DSHAKRHHGY products. In Candida albicans (Yeast), this protein is Secreted aspartic protease 2.